Consider the following 399-residue polypeptide: MAMDIETLLDLEKLYSAIMTYFDNPLTLLIVVATIIIVLIVIVWITKMVIDLAPYAYVNARIRSKEAKLFDDAKLNELIESGSLEELVGLLEDTDYGQYVIEVMNELKDPVAVEKALDMYLADLYGLIYRISPDSAKKVLKVFAKKFDIKNIKTLIRAKFVGLSAEETYALLIPLGNIPVEKLKELAEVKTVEEVVRGLDGTEYFKILQEELSNYDQTSNIIGFELALDKYYLESLRKTIMTEGKEEDIFREFVGTIIDVENLKVILKGKADGLSAEELSKYVTLTGYELADWKLKDLMSAGGIEGVLSGLEGTSYAEVLAEAMEEYEKTKSIYAFEKALDKFVLEKGKKLSTRKPFGVGPIIGLIVSKELEVKNLKAIIKGKIENLKPEEIRSLLISL.

Belongs to the V-ATPase V0D/AC39 subunit family. As to quaternary structure, the A-type ATPase is composed of subunits A(3), B(3), C, D, E(1 or 2), F, H(2), I and K(x).

It is found in the cell membrane. Its function is as follows. Component of the A-type ATP synthase that produces ATP from ADP in the presence of a proton gradient across the membrane. This is A-type ATP synthase subunit C from Methanocaldococcus jannaschii (strain ATCC 43067 / DSM 2661 / JAL-1 / JCM 10045 / NBRC 100440) (Methanococcus jannaschii).